The chain runs to 201 residues: Lipoprotein signal peptidase (201 aa).

The next 2 helical transmembrane spans lie at 73 to 93 (SNAI…YLMI) and 97 to 117 (TIGS…NLID). Active-site residues include D126 and D144. A helical membrane pass occupies residues 135–155 (YSFPVFNLADCFITIGVIILI).

The protein belongs to the peptidase A8 family.

Its subcellular location is the cell inner membrane. It catalyses the reaction Release of signal peptides from bacterial membrane prolipoproteins. Hydrolyzes -Xaa-Yaa-Zaa-|-(S,diacylglyceryl)Cys-, in which Xaa is hydrophobic (preferably Leu), and Yaa (Ala or Ser) and Zaa (Gly or Ala) have small, neutral side chains.. It participates in protein modification; lipoprotein biosynthesis (signal peptide cleavage). This protein specifically catalyzes the removal of signal peptides from prolipoproteins. The polypeptide is Lipoprotein signal peptidase (Rickettsia africae (strain ESF-5)).